A 565-amino-acid chain; its full sequence is Urocanate hydratase (565 aa).

Residues 58-59 (GG), Q136, 182-184 (GMG), E202, R207, 245-246 (NA), 266-270 (QTSAH), 276-277 (YL), and Y325 each bind NAD(+). Residue C413 is part of the active site. Residue G495 coordinates NAD(+).

This sequence belongs to the urocanase family. NAD(+) serves as cofactor.

Its subcellular location is the cytoplasm. It carries out the reaction 4-imidazolone-5-propanoate = trans-urocanate + H2O. It participates in amino-acid degradation; L-histidine degradation into L-glutamate; N-formimidoyl-L-glutamate from L-histidine: step 2/3. Functionally, catalyzes the conversion of urocanate to 4-imidazolone-5-propionate. The protein is Urocanate hydratase of Vibrio vulnificus (strain YJ016).